The following is a 324-amino-acid chain: Granaticin polyketide synthase bifunctional cyclase/dehydratase (324 aa).

The interval 1 to 21 is disordered; sequence MVQPAATPVSLPSPTVHRSEH.

It functions in the pathway antibiotic biosynthesis; granaticin biosynthesis. In terms of biological role, is needed for correct cyclization of the oligoketide leading to isochromanequinone formation. In Streptomyces violaceoruber, this protein is Granaticin polyketide synthase bifunctional cyclase/dehydratase (gra-orf4).